Reading from the N-terminus, the 72-residue chain is MAKEDVIEVEGKVIEPLPNAMFRVELANGHRVLAHVSGKIRMNFIRILPGDRVTVELSPYDLNRGRIVYRYK.

Residues 1-72 (MAKEDVIEVE…NRGRIVYRYK (72 aa)) form the S1-like domain.

The protein belongs to the IF-1 family. In terms of assembly, component of the 30S ribosomal translation pre-initiation complex which assembles on the 30S ribosome in the order IF-2 and IF-3, IF-1 and N-formylmethionyl-tRNA(fMet); mRNA recruitment can occur at any time during PIC assembly.

The protein resides in the cytoplasm. In terms of biological role, one of the essential components for the initiation of protein synthesis. Stabilizes the binding of IF-2 and IF-3 on the 30S subunit to which N-formylmethionyl-tRNA(fMet) subsequently binds. Helps modulate mRNA selection, yielding the 30S pre-initiation complex (PIC). Upon addition of the 50S ribosomal subunit IF-1, IF-2 and IF-3 are released leaving the mature 70S translation initiation complex. The chain is Translation initiation factor IF-1 from Moorella thermoacetica (strain ATCC 39073 / JCM 9320).